The chain runs to 926 residues: Disease resistance protein RPM1 (926 aa).

Residues 10–45 (IGRILSVLENETLLLSGVHGEIDKMKKELLIMKSFL) are leucine-zipper. The NB-ARC domain occupies 153 to 467 (DAKWVNNISE…AQRFVEPIRG (315 aa)). 200–207 (GMGGSGKT) lines the ATP pocket. LRR repeat units follow at residues 561 to 580 (LHSL…LPSL), 581 to 603 (NLLR…LVTM), 605 to 625 (NLKY…NFHK), 626 to 649 (LVNL…MWKL), 686 to 707 (LQVM…CMTQ), 708 to 731 (LTRI…LNKI), 756 to 777 (TASI…WFNT), 778 to 804 (LQNL…TLPR), 825 to 836 (FQNLKILEIVQM), 837 to 859 (KHLT…YVRA), and 876 to 900 (LQEL…SVDR).

It belongs to the disease resistance NB-LRR family. As to quaternary structure, interacts directly with RIN4 via its N-terminal region. Interacts (via N-terminus) with RIN2 and RIN3 (via C-terminus). Interacts with TIP49A, a protein known to interact with the TATA binding protein complex (TBP). Binds to MORC1/CRT1. Interacts, via its NB-ARC domain, with RIN13.

It localises to the endomembrane system. It is found in the cell membrane. Functionally, disease resistance (R) protein that specifically recognizes the AvrRpm1 type III effector avirulence protein from Pseudomonas syringae. Resistance proteins guard the plant against pathogens that contain an appropriate avirulence protein via an indirect interaction with this avirulence protein. That triggers a defense system including the hypersensitive response (HR), which restricts the pathogen growth. Acts via its interaction with RIN4, and probably triggers the plant resistance when RIN4 is phosphorylated by AvrRpm1. It is then degraded at the onset of the hypersensitive response. The polypeptide is Disease resistance protein RPM1 (Arabidopsis thaliana (Mouse-ear cress)).